Here is a 642-residue protein sequence, read N- to C-terminus: LIM domain kinase 2 (642 aa).

2 consecutive LIM zinc-binding domains span residues 12 to 63 and 72 to 124; these read CLGC…CHKD and CHGC…CGKC. In terms of domain architecture, PDZ spans 152 to 239; that stretch reads LISMPAATDG…TLQLLIEHDP (88 aa). The interval 282–304 is disordered; that stretch reads RSLRRSNSISKSPGPSSPKEPLL. The span at 286–304 shows a compositional bias: low complexity; sequence RSNSISKSPGPSSPKEPLL. Positions 331 to 608 constitute a Protein kinase domain; it reads LIHGEVLGKG…DSFEALSLYL (278 aa). ATP contacts are provided by residues 337–345 and Lys360; that span reads LGKGFFGQA. Asp451 is a catalytic residue. A Phosphothreonine modification is found at Thr505.

It belongs to the protein kinase superfamily. TKL Ser/Thr protein kinase family. Binds ROCK1 and LKAP. Expressed predominantly in the lung, and faintly in the kidney, liver, brain, spleen, gizzard, and intestine.

It is found in the cytoplasm. The protein resides in the cytoskeleton. Its subcellular location is the spindle. It localises to the microtubule organizing center. The protein localises to the centrosome. The enzyme catalyses L-seryl-[protein] + ATP = O-phospho-L-seryl-[protein] + ADP + H(+). It catalyses the reaction L-threonyl-[protein] + ATP = O-phospho-L-threonyl-[protein] + ADP + H(+). Its function is as follows. Serine/threonine-protein kinase that plays an essential role in the regulation of actin filament dynamics. Acts downstream of several Rho family GTPase signal transduction pathways. Involved in astral microtubule organization and mitotic spindle orientation during early stages of mitosis by mediating phosphorylation of TPPP. In Gallus gallus (Chicken), this protein is LIM domain kinase 2 (LIMK2).